Reading from the N-terminus, the 326-residue chain is Polycomb complex protein BMI-1 (326 aa).

An RING-type zinc finger spans residues 18 to 57; the sequence is CVLCGGYFIDATTIIECLHSFCKTCIVRYLETSKYCPICD. The Nuclear localization signal motif lies at 81–95; that stretch reads KLVPGLFKNEMKRRR. An interaction with PHC2 region spans residues 162–182; sequence RYLRCPAAMTVMHLRKFLRSK. The tract at residues 164-228 is interaction with E4F1; the sequence is LRCPAAMTVM…GPLPLKYRVR (65 aa). A disordered region spans residues 236 to 326; the sequence is IGHQREGLSN…INGSSATSSG (91 aa). Positions 265-278 are enriched in low complexity; it reads LPSTSSCLPSPSTP. Residues 279–310 are compositionally biased toward polar residues; it reads VQSPHPQFPHISSTMNGTSSSPGSNHQSSFTN. Over residues 315 to 326 the composition is skewed to low complexity; sequence SSINGSSATSSG.

In terms of assembly, component of a PRC1-like complex.

It localises to the nucleus. Its subcellular location is the cytoplasm. In terms of biological role, component of a Polycomb group (PcG) multiprotein PRC1-like complex, a complex class required to maintain the transcriptionally repressive state of many genes, including Hox genes, throughout development. PcG PRC1 complex acts via chromatin remodeling and modification of histones; it mediates monoubiquitination of histone H2A 'Lys-119', rendering chromatin heritably changed in its expressibility. In the PRC1-like complex, regulates the E3 ubiquitin-protein ligase activity of RNF2/RING2. The sequence is that of Polycomb complex protein BMI-1 (BMI1) from Gallus gallus (Chicken).